The chain runs to 129 residues: MAKDATRIRRRERKNIASGIAHVNSSFNNTTITITDAQGNAIAWSSAGTMGFKGSRKSTPYAAQVAAEDVAKKAQEHGMRTLEVEVAGPGSGRESALRALQAAGFTVTSIRDVTTIPHNGCRPRKRRRV.

In terms of assembly, part of the 30S ribosomal subunit. Interacts with proteins S7 and S18. Binds to IF-3. May be methylated on an undetermined residue.

In terms of biological role, located on the platform of the 30S subunit, it bridges several disparate RNA helices of the 16S rRNA. Forms part of the Shine-Dalgarno cleft in the 70S ribosome. This is Small ribosomal subunit protein uS11 from Rhodopseudomonas palustris (strain ATCC BAA-98 / CGA009).